Reading from the N-terminus, the 211-residue chain is Claudin-7 (211 aa).

Topologically, residues 1–7 (MANSGLQ) are cytoplasmic. A helical transmembrane segment spans residues 8 to 28 (LLGFSMAMLGWVGLIASTAIP). Residues 29-81 (QWQMSSYAGDNIITAQAMYKGLWMECVTQSTGMMSCKMYDSVLALPGALQATR) lie on the Extracellular side of the membrane. Residues 82-102 (ALMVVSLVLGFLAMFVATMGM) form a helical membrane-spanning segment. Residues 103-119 (KCTRCGGDDKAKKARIA) are Cytoplasmic-facing. A helical membrane pass occupies residues 120–140 (MTGGIVFIVAGLAALVACSWI). Residues 141-160 (GHQIVTDFYNPLTPMNVKYE) are Extracellular-facing. The helical transmembrane segment at 161–181 (FGPAIFIGWAGSALVLLGGAL) threads the bilayer. Residues 182-211 (LSCSCPGSESKAAYRAPRSYPKSNSSKEYV) lie on the Cytoplasmic side of the membrane. The interactions with TJP1, TJP2 and TJP3 stretch occupies residues 210–211 (YV).

This sequence belongs to the claudin family. In terms of assembly, directly interacts with TJP1/ZO-1, TJP2/ZO-2 and TJP3/ZO-3. The phosphorylated form interacts with EPCAM. Phosphorylated. As to expression, expressed predominantly in lung and kidney.

It localises to the cell membrane. The protein localises to the basolateral cell membrane. The protein resides in the cell junction. It is found in the tight junction. Its function is as follows. Plays a major role in tight junction-specific obliteration of the intercellular space, through calcium-independent cell-adhesion activity. This Mus musculus (Mouse) protein is Claudin-7 (Cldn7).